Consider the following 346-residue polypeptide: Methionine import ATP-binding protein MetN (346 aa).

One can recognise an ABC transporter domain in the interval 2–243 (VRFEGISKTY…PKHPITQSFL (242 aa)). An ATP-binding site is contributed by 40-47 (GRSGAGKS).

Belongs to the ABC transporter superfamily. Methionine importer (TC 3.A.1.24) family. As to quaternary structure, the complex is composed of two ATP-binding proteins (MetN), two transmembrane proteins (MetI) and a solute-binding protein (MetQ).

Its subcellular location is the cell inner membrane. The enzyme catalyses L-methionine(out) + ATP + H2O = L-methionine(in) + ADP + phosphate + H(+). The catalysed reaction is D-methionine(out) + ATP + H2O = D-methionine(in) + ADP + phosphate + H(+). Part of the ABC transporter complex MetNIQ involved in methionine import. Responsible for energy coupling to the transport system. The protein is Methionine import ATP-binding protein MetN of Bradyrhizobium diazoefficiens (strain JCM 10833 / BCRC 13528 / IAM 13628 / NBRC 14792 / USDA 110).